A 412-amino-acid polypeptide reads, in one-letter code: MLNQQQTYKLLERFLHYTTYDTQSKSGAKISPSSAGQLKLAKHLQQELFALGLQDIDISKHSVVTAFLPSNVNPHSPTIGFIAHLDTATQCSGKNVQAEVIENYRGGDIALGVGEEFISPAHYQFLHQLIGKTLVVADGNTLLGADNKAGIAEIMTALAVLKEENLPHCNIRVAFTPDEEIGLGMQFFPVEKFPCDWAYTIDGGEVGELEYENFNAATAIVTIEGVNMHTGSAKDKMINALTLACEFQQGFPAEETPEQTEGKQGFYHLSHFTGHVEKVELQYLIRDFDRDGFEQRKIFIQQLVDRFNQQKRLKKPITLEIKDSYKNMNEVVKTVPQSVELADSAMRECGIEPIHKAIRGGTDGAWLAEQGLACPNVFTGGYNFHSKHELITLEGMQSAVNVITTIVRLATS.

Zn(2+) is bound at residue H84. D86 is a catalytic residue. Residue D146 participates in Zn(2+) binding. E179 acts as the Proton acceptor in catalysis. Residues E180, D202, and H385 each coordinate Zn(2+).

It belongs to the peptidase M20B family. It depends on Zn(2+) as a cofactor.

The protein localises to the cytoplasm. It carries out the reaction Release of the N-terminal residue from a tripeptide.. Its function is as follows. Cleaves the N-terminal amino acid of tripeptides. The protein is Peptidase T of Pasteurella multocida (strain Pm70).